Here is a 277-residue protein sequence, read N- to C-terminus: DNA-binding transcriptional activator MhpR (277 aa).

Residues 12 to 74 (VRGLTRGLML…PSDDSFRLTI (63 aa)) enclose the HTH iclR-type domain. The segment at residues 34-53 (VGLLAELSGLHRTTVRRLLE) is a DNA-binding region (H-T-H motif). The IclR-ED domain occupies 89–262 (ISALAAPLLG…AKQIEEGVES (174 aa)).

Its function is as follows. Activator of the mhpABCDFE operon coding for components of the 3-hydroxyphenylpropionate degradation pathway. The sequence is that of DNA-binding transcriptional activator MhpR (mhpR) from Escherichia coli (strain K12).